A 213-amino-acid chain; its full sequence is Cytochrome c biogenesis ATP-binding export protein CcmA (213 aa).

The ABC transporter domain maps to 3–211 (LTAENLGVRR…QMTGFAGVET (209 aa)). 35-42 (GRNGSGKS) serves as a coordination point for ATP.

It belongs to the ABC transporter superfamily. CcmA exporter (TC 3.A.1.107) family. The complex is composed of two ATP-binding proteins (CcmA) and two transmembrane proteins (CcmB).

The protein resides in the cell inner membrane. The catalysed reaction is heme b(in) + ATP + H2O = heme b(out) + ADP + phosphate + H(+). In terms of biological role, part of the ABC transporter complex CcmAB involved in the biogenesis of c-type cytochromes; once thought to export heme, this seems not to be the case, but its exact role is uncertain. Responsible for energy coupling to the transport system. This Agrobacterium fabrum (strain C58 / ATCC 33970) (Agrobacterium tumefaciens (strain C58)) protein is Cytochrome c biogenesis ATP-binding export protein CcmA.